The following is a 247-amino-acid chain: Homeobox-leucine zipper protein HOX15 (247 aa).

Residues 1-44 (MAQDDEDVGLALGLSLGSGGHRRQRESRDEAPSSAAASLLTLRL) form a disordered region. Over residues 32-44 (PSSAAASLLTLRL) the composition is skewed to low complexity. A DNA-binding region (homeobox) is located at residues 91–150 (NSRKKLRLSKEQSALLEDRFKEHSTLNPKQKVALAKQLNLRPRQVEVWFQNRRARTKLKQ). The interval 149–193 (KQTEVDCELLKRCCETLTEENRRLHRELQQLRALTHSTAAGFFMA) is leucine-zipper. A disordered region spans residues 221–247 (SPTAAADRTNKPTAPHLFSPFAKSAAC).

This sequence belongs to the HD-ZIP homeobox family. Class II subfamily. Expressed in seedlings, stems, leaf blades and panicles.

The protein resides in the nucleus. Functionally, probable transcription factor. The chain is Homeobox-leucine zipper protein HOX15 (HOX15) from Oryza sativa subsp. japonica (Rice).